Reading from the N-terminus, the 513-residue chain is Activin receptor type-2A (513 aa).

The N-terminal stretch at 1–19 (MGAAAKLAFAVFLISCSSG) is a signal peptide. At 20 to 135 (AILGRSETQE…TSNPVTPKPP (116 aa)) the chain is on the extracellular side. 5 cysteine pairs are disulfide-bonded: cysteine 30-cysteine 60, cysteine 50-cysteine 78, cysteine 85-cysteine 104, cysteine 91-cysteine 103, and cysteine 105-cysteine 110. Residues asparagine 43 and asparagine 66 are each glycosylated (N-linked (GlcNAc...) asparagine). A helical transmembrane segment spans residues 136 to 161 (YYNILLYSLVPLMLIAGIVICAFWVY). Residues 162-513 (RHHMMAYPPV…VDFPPKESSL (352 aa)) lie on the Cytoplasmic side of the membrane. Residues 192–485 (LQLLEVKARG…GERITQMQRL (294 aa)) enclose the Protein kinase domain. Residues 198–206 (KARGRFGCV) and lysine 219 contribute to the ATP site. Aspartate 322 functions as the Proton acceptor in the catalytic mechanism.

The protein belongs to the protein kinase superfamily. TKL Ser/Thr protein kinase family. TGFB receptor subfamily. As to quaternary structure, part of a complex consisting of MAGI2/ARIP1, ACVR2A, ACVR1B and SMAD3. Interacts with MAGI2/ARIP1. Interacts with type I receptor ACVR1. Interacts with BMP7. Interacts with TSC22D1/TSC-22. Interacts with activin A/INHBA. The cofactor is Mg(2+). Mn(2+) is required as a cofactor.

It localises to the cell membrane. It catalyses the reaction L-threonyl-[receptor-protein] + ATP = O-phospho-L-threonyl-[receptor-protein] + ADP + H(+). The enzyme catalyses L-seryl-[receptor-protein] + ATP = O-phospho-L-seryl-[receptor-protein] + ADP + H(+). On ligand binding, forms a receptor complex consisting of two type II and two type I transmembrane serine/threonine kinases. Type II receptors phosphorylate and activate type I receptors which autophosphorylate, then bind and activate SMAD transcriptional regulators. Receptor for activin A, activin B and inhibin A. Mediates induction of adipogenesis by GDF6. The protein is Activin receptor type-2A of Rattus norvegicus (Rat).